The primary structure comprises 329 residues: Flotillin-like protein FloA (329 aa).

Transmembrane regions (helical) follow at residues 4–24 (IGFIIIAVIIVVALLILFSFV) and 26–46 (VGLWISALAAGVHVGIGTLVG).

The protein belongs to the flotillin-like FloA family. Homooligomerizes.

Its subcellular location is the cell membrane. The protein localises to the membrane raft. Its function is as follows. Found in functional membrane microdomains (FMM) that may be equivalent to eukaryotic membrane rafts. FMMs are highly dynamic and increase in number as cells age. Flotillins are thought to be important factors in membrane fluidity. This chain is Flotillin-like protein FloA, found in Staphylococcus epidermidis (strain ATCC 35984 / DSM 28319 / BCRC 17069 / CCUG 31568 / BM 3577 / RP62A).